The primary structure comprises 639 residues: Alpha-dioxygenase 1 (639 aa).

His-163 functions as the Proton acceptor in the catalytic mechanism. Asp-164 is a Ca(2+) binding site. His-168 is a heme b binding site. Ca(2+)-binding residues include Thr-216, Trp-218, Asp-220, and Ser-222. 3 residues coordinate heme b: His-389, Arg-486, and Arg-490.

The protein belongs to the peroxidase family. In terms of assembly, forms monomers in solution. Requires heme b as cofactor. Ca(2+) serves as cofactor. Expressed in roots (epiderm), mature flowers (e.g. anthers) and senescing leaves.

The protein resides in the lipid droplet. It catalyses the reaction a 1,2-saturated fatty acid + O2 = a (2R)-2-hydroperoxy fatty acid. The enzyme catalyses (9Z,12Z,15Z)-octadecatrienoate + O2 = (R)-2-hydroperoxy-(9Z,12Z,15Z)-octadecatrienoate. It carries out the reaction hexadecanoate + O2 = (2R)-2-hydroperoxyhexadecanoate. The catalysed reaction is (9Z,12Z)-octadecadienoate + O2 = (2R,9Z,12Z)-2-hydroperoxyoctadecadienoate. It catalyses the reaction (9Z)-octadecenoate + O2 = (2R,9Z)-2-hydroperoxyoctadecenoate. Functionally, alpha-dioxygenase that catalyzes the primary oxygenation step of a variety of 14-20 carbon fatty acids, containing up to three unsaturated bonds, into their corresponding 2R-hydroperoxides. Involved in the production of oxylipins that function in cell signaling, wound healing, and protection from infection. Mediates protection against oxidative stress and cell death, probably by generating some lipid-derived molecules. Promotes local and systemic plant defense in a salicylic acid (SA)-dependent manner, including the establishment of systemic acquired resistance (SAR) in response to incompatible interaction. Involved in a negative regulation of abscisic acid (ABA)-mediated signaling pathway. This is Alpha-dioxygenase 1 from Arabidopsis thaliana (Mouse-ear cress).